We begin with the raw amino-acid sequence, 150 residues long: Deoxyuridine 5'-triphosphate nucleotidohydrolase (150 aa).

Substrate-binding positions include 69–71 (RSG), Asn-82, and 86–88 (TID).

The protein belongs to the dUTPase family. The cofactor is Mg(2+).

The catalysed reaction is dUTP + H2O = dUMP + diphosphate + H(+). Its pathway is pyrimidine metabolism; dUMP biosynthesis; dUMP from dCTP (dUTP route): step 2/2. Functionally, this enzyme is involved in nucleotide metabolism: it produces dUMP, the immediate precursor of thymidine nucleotides and it decreases the intracellular concentration of dUTP so that uracil cannot be incorporated into DNA. The chain is Deoxyuridine 5'-triphosphate nucleotidohydrolase from Syntrophus aciditrophicus (strain SB).